A 234-amino-acid chain; its full sequence is tRNA1(Val) (adenine(37)-N6)-methyltransferase (234 aa).

Belongs to the methyltransferase superfamily. tRNA (adenine-N(6)-)-methyltransferase family.

Its subcellular location is the cytoplasm. The catalysed reaction is adenosine(37) in tRNA1(Val) + S-adenosyl-L-methionine = N(6)-methyladenosine(37) in tRNA1(Val) + S-adenosyl-L-homocysteine + H(+). In terms of biological role, specifically methylates the adenine in position 37 of tRNA(1)(Val) (anticodon cmo5UAC). The sequence is that of tRNA1(Val) (adenine(37)-N6)-methyltransferase from Aliivibrio fischeri (strain ATCC 700601 / ES114) (Vibrio fischeri).